Here is a 585-residue protein sequence, read N- to C-terminus: ATP-dependent lipid A-core flippase (585 aa).

5 helical membrane-spanning segments follow: residues 16–36 (LWPYISFYKAGLSVAVVALII), 66–86 (FLSMMPYYLVGLMILRGASGF), 156–176 (IIGLMALMFWNSWQLSAILLV), 252–272 (AIANPVIQVIASFALVVVLVL), and 278–298 (LRAELTPGTFAVVFGAMFGLM). One can recognise an ABC transmembrane type-1 domain in the interval 29–313 (VAVVALIINA…LTNVTSQFQR (285 aa)). An ABC transporter domain is found at 345-581 (IQVKNVTFTY…DGAYAQLHRI (237 aa)). 379–386 (GRSGSGKS) is an ATP binding site.

This sequence belongs to the ABC transporter superfamily. Lipid exporter (TC 3.A.1.106) family. In terms of assembly, homodimer.

It localises to the cell inner membrane. It carries out the reaction ATP + H2O + lipid A-core oligosaccharideSide 1 = ADP + phosphate + lipid A-core oligosaccharideSide 2.. Functionally, involved in lipopolysaccharide (LPS) biosynthesis. Translocates lipid A-core from the inner to the outer leaflet of the inner membrane. Transmembrane domains (TMD) form a pore in the inner membrane and the ATP-binding domain (NBD) is responsible for energy generation. The protein is ATP-dependent lipid A-core flippase of Photobacterium profundum (strain SS9).